Reading from the N-terminus, the 622-residue chain is Chaperone protein HscA homolog (622 aa).

The protein belongs to the heat shock protein 70 family.

In terms of biological role, chaperone involved in the maturation of iron-sulfur cluster-containing proteins. Has a low intrinsic ATPase activity which is markedly stimulated by HscB. This Verminephrobacter eiseniae (strain EF01-2) protein is Chaperone protein HscA homolog.